The following is a 208-amino-acid chain: Platelet glycoprotein Ib beta chain (208 aa).

An N-terminal signal peptide occupies residues 1–26; sequence MGSGPRGAVSLLLLMLAPPSCPAADC. 2 disulfide bridges follow: cysteine 26-cysteine 32 and cysteine 30-cysteine 39. In terms of domain architecture, LRRNT spans 27 to 55; the sequence is PAPCSCAGTLVDCGRRGLTWASLPTSFPV. Residues 27 to 147 lie on the Extracellular side of the membrane; it reads PAPCSCAGTL…RAACAPGPLC (121 aa). An LRR repeat occupies 60-83; sequence LVLTGNNLTALPSGLLDALPAVRT. Asparagine 66 carries N-linked (GlcNAc...) asparagine glycosylation. Residues 89–143 form the LRRCT domain; the sequence is NPWRCDCRLVPLRAWLAGRPERAPYRDLRCVAPPAVRGRLLPYLAEDDVRAACAP. Cystine bridges form between cysteine 93-cysteine 118 and cysteine 95-cysteine 141. The helical transmembrane segment at 148-172 threads the bilayer; it reads WGALAAELALLGLGLLHALLLVLLL. Residues 173–208 lie on the Cytoplasmic side of the membrane; the sequence is CRLRRLRARARARARAALRLSLTDPLVAEQDGTDES. Serine 193 carries the phosphoserine; by PKA modification. Threonine 195 carries the phosphothreonine modification.

In terms of assembly, two GP-Ib beta are disulfide-linked to one GP-Ib alpha. GP-IX is complexed with the GP-Ib heterodimer via a non covalent linkage. Interacts with TRAF4.

The protein localises to the membrane. In terms of biological role, gp-Ib, a surface membrane protein of platelets, participates in the formation of platelet plugs by binding to von Willebrand factor, which is already bound to the subendothelium. The protein is Platelet glycoprotein Ib beta chain (GP1BB) of Papio cynocephalus (Yellow baboon).